The following is a 476-amino-acid chain: ATP synthase subunit beta (476 aa).

154–161 (GGAGVGKT) serves as a coordination point for ATP.

The protein belongs to the ATPase alpha/beta chains family. In terms of assembly, F-type ATPases have 2 components, CF(1) - the catalytic core - and CF(0) - the membrane proton channel. CF(1) has five subunits: alpha(3), beta(3), gamma(1), delta(1), epsilon(1). CF(0) has four main subunits: a(1), b(1), b'(1) and c(9-12).

The protein resides in the cell inner membrane. It carries out the reaction ATP + H2O + 4 H(+)(in) = ADP + phosphate + 5 H(+)(out). In terms of biological role, produces ATP from ADP in the presence of a proton gradient across the membrane. The catalytic sites are hosted primarily by the beta subunits. The protein is ATP synthase subunit beta of Rhodopseudomonas palustris (strain BisB5).